The primary structure comprises 121 residues: uncharacterized protein (121 aa).

Disordered regions lie at residues 38–76 (NQMA…KYQQ) and 91–121 (SVLR…KQEN). Residues 43–63 (KRNKQSKKPKQTSKGVKKSSK) show a composition bias toward basic residues. The segment covering 64–76 (QNKNSSKNNKYQQ) has biased composition (low complexity).

This is an uncharacterized protein from Schizosaccharomyces pombe (strain 972 / ATCC 24843) (Fission yeast).